The primary structure comprises 185 residues: Pycsar effector protein EcPycTM (185 aa).

The next 3 membrane-spanning stretches (helical) occupy residues 32-52 (ALLLAVNGATATILSNKVGYF), 63-83 (MVIFFLLLFMISIFIFMSVLL), and 141-161 (FILSCIAKQKFLFFSSAVSWI).

It is found in the cell inner membrane. Pycsar (pyrimidine cyclase system for antiphage resistance) provides immunity against bacteriophage. The pyrimidine cyclase (PycC) synthesizes cyclic nucleotides in response to infection; these serve as specific second messenger signals. The signals activate the adjacent effector, leading to bacterial cell death and abortive phage infection. A clade E Pycsar system. Functionally, the effector component of a two-gene Pycsar system. Expression of this and adjacent cytidylate cyclase EcPycC (AC P0DV24) confers resistance to bacteriophage P1 and T5; this protein is required for resistance. When cells expressing the Pycsar system are infected by phage T5 at low multiplicity of infection (0.2 MOI) the culture survives, at 2.0 MOI bacteria enter growth arrest. The same cells enter growth arrest after exposure to 250 uM cCMP but not cUMP; this effector protein responds only to cCMP, usually produced by its cognate NTP cyclase. Some of the cells treated with cCMP have abnormal membrane protrusions, probably due to effects on membrane integrity. This chain is Pycsar effector protein EcPycTM, found in Escherichia coli.